We begin with the raw amino-acid sequence, 350 residues long: MSMIFNTEYGYLEALTRGFKNGMLKHSDYLNLTQCESLEDVMISIQGTDYGLIFGGEQSAPSVEVIERCLRDRLLQQYYYIRSHSTEPLTTFMEFIRYPFMIDNVALLVAGLNNHRSMKRLLRMCHPLGEFDQLGAIEVASNSAELFDAVLIDTPIARFVPRDLPMESLRYLDVEIVRAHLYRAYLEKFYAYCSQLGGNTANVMTNLLSFEADRRTITIAVNAIGSDIIPKERLKMFPTCGYLPKIALASMSTLNDTDKIRDVCNVFDGYGKMFDNLERDSDGMITLEDRFLMMEAKKNVQTFLQQYHFGIFYSFIKLKQLEVRNIVWISECIAQRQTDRINAFIPIPLD.

Belongs to the V-ATPase V0D/AC39 subunit family. V-ATPase is a heteromultimeric enzyme made up of two complexes: the ATP-hydrolytic V1 complex and the proton translocation V0 complex. The V1 complex consists of three catalytic AB heterodimers that form a heterohexamer, three peripheral stalks each consisting of EG heterodimers, one central rotor including subunits D and F, and the regulatory subunits C and H. The proton translocation complex V0 consists of the proton transport subunit a, a ring of proteolipid subunits c9c'', rotary subunit d, subunits e and f, and the accessory subunits VhaAC45 and ATP6AP2.

Functionally, subunit of the V0 complex of vacuolar(H+)-ATPase (V-ATPase), a multisubunit enzyme composed of a peripheral complex (V1) that hydrolyzes ATP and a membrane integral complex (V0) that translocates protons. V-ATPase is responsible for acidifying and maintaining the pH of intracellular compartments and in some cell types, is targeted to the plasma membrane, where it is responsible for acidifying the extracellular environment. May play a role in coupling of proton transport and ATP hydrolysis. The protein is Probable V-type proton ATPase subunit d 2 (VhaAC39-2) of Drosophila melanogaster (Fruit fly).